Consider the following 301-residue polypeptide: Mitochondrial substrate carrier family protein Z (301 aa).

The Mitochondrial intermembrane portion of the chain corresponds to 1 to 19 (MTGKEENKQQQHVNFPWKR). 3 Solcar repeats span residues 14 to 101 (NFPW…FTEQ), 116 to 200 (QQFG…ISDY), and 210 to 293 (LPVW…VMGI). Residues 20–37 (LVAGAVAGTADVWACHPL) traverse the membrane as a helical segment. The Mitochondrial matrix segment spans residues 38–65 (DRIKTQLQNNPGKSIVGTFGDIVSKGKG). A helical membrane pass occupies residues 66–86 (FTGGVNALYEGILPMTAEAIF). Residues 87–117 (KVGIRYFAFSWFTEQYKTTVYKGETLNKKQQ) lie on the Mitochondrial intermembrane side of the membrane. A helical membrane pass occupies residues 118-138 (FGANLLGGAFAGTIESFVVVI). At 139–174 (PCELLKVRHMTQEHNKSFGTVFRDVLREEGFQGLYK) the chain is on the mitochondrial matrix side. The chain crosses the membrane as a helical span at residues 175–191 (GGSATLLRQITNHMIRF). Topologically, residues 192-212 (PTFYAISDYLKGGDHSVHLPV) are mitochondrial intermembrane. The chain crosses the membrane as a helical span at residues 213–229 (WQNLSAGAIAGTASTLF). Topologically, residues 230 to 275 (NNPLDTIKTRMQKQGQNQTTMQVVRGIYQETGVKGYWAGVIPRILR) are mitochondrial matrix. A helical transmembrane segment spans residues 276–296 (VAPGQAITWAVVELVMGILEP). At 297 to 301 (SSKKH) the chain is on the mitochondrial intermembrane side.

The protein belongs to the mitochondrial carrier (TC 2.A.29) family.

The protein resides in the mitochondrion inner membrane. In terms of biological role, mitochondrial solute carriers shuttle metabolites, nucleotides, and cofactors through the mitochondrial inner membrane. The protein is Mitochondrial substrate carrier family protein Z (mcfZ) of Dictyostelium discoideum (Social amoeba).